Consider the following 341-residue polypeptide: UDP-3-O-acylglucosamine N-acyltransferase (341 aa).

The active-site Proton acceptor is the H239.

It belongs to the transferase hexapeptide repeat family. LpxD subfamily. As to quaternary structure, homotrimer.

It catalyses the reaction a UDP-3-O-[(3R)-3-hydroxyacyl]-alpha-D-glucosamine + a (3R)-hydroxyacyl-[ACP] = a UDP-2-N,3-O-bis[(3R)-3-hydroxyacyl]-alpha-D-glucosamine + holo-[ACP] + H(+). Its pathway is bacterial outer membrane biogenesis; LPS lipid A biosynthesis. Its function is as follows. Catalyzes the N-acylation of UDP-3-O-acylglucosamine using 3-hydroxyacyl-ACP as the acyl donor. Is involved in the biosynthesis of lipid A, a phosphorylated glycolipid that anchors the lipopolysaccharide to the outer membrane of the cell. This chain is UDP-3-O-acylglucosamine N-acyltransferase, found in Shewanella sp. (strain MR-7).